Here is a 63-residue protein sequence, read N- to C-terminus: UPF0370 protein ECA1289 (63 aa).

The chain crosses the membrane as a helical span at residues 3–23 (WLADYWWIILIILIGMLINGI). Residues 39–63 (PKLPPHRDNNDKWDNEEDDWPKKKP) form a disordered region.

It belongs to the UPF0370 family.

Its subcellular location is the cell membrane. This Pectobacterium atrosepticum (strain SCRI 1043 / ATCC BAA-672) (Erwinia carotovora subsp. atroseptica) protein is UPF0370 protein ECA1289.